We begin with the raw amino-acid sequence, 209 residues long: Large ribosomal subunit protein bL9 (209 aa).

The disordered stretch occupies residues Arg-169 to Leu-209. A compositionally biased stretch (acidic residues) spans Glu-189–Leu-209.

The protein belongs to the bacterial ribosomal protein bL9 family.

Binds to the 23S rRNA. The sequence is that of Large ribosomal subunit protein bL9 from Zymomonas mobilis subsp. mobilis (strain ATCC 31821 / ZM4 / CP4).